Reading from the N-terminus, the 143-residue chain is MFMGEFEHSLDSKGRLIIPSKFRDQLDSNFVVTRGLDGCLFVYPLSEWRLVEEKLSQLPSNKKNNRAFVRFMFADAVQCDFDKQGRIIIPKKLRLHAELQKECVLVGVSNRVEIWNKARWEETIEETEENFDDIAENLIDFGL.

SpoVT-AbrB domains are found at residues 5-47 (EFEH…PLSE) and 76-119 (AVQC…NKAR).

Belongs to the MraZ family. Forms oligomers.

Its subcellular location is the cytoplasm. It is found in the nucleoid. This Pediococcus pentosaceus (strain ATCC 25745 / CCUG 21536 / LMG 10740 / 183-1w) protein is Transcriptional regulator MraZ.